A 263-amino-acid polypeptide reads, in one-letter code: Eukaryotic translation initiation factor 3 subunit J-B (263 aa).

Over residues 1–13 the composition is skewed to low complexity; sequence MAAAAAAAAAAAA. A disordered region spans residues 1 to 115; that stretch reads MAAAAAAAAA…EPEESKVLTP (115 aa). A2 carries the post-translational modification N-acetylalanine. Residues 6 to 74 are sufficient for interaction with EIF3B; sequence AAAAAAAAGD…KEEAEVKPEV (69 aa). Phosphoserine is present on residues S16, S18, and S25. Over residues 45–66 the composition is skewed to acidic residues; that stretch reads EGEDEDEDVKDNWDDDDDENKE. A compositionally biased stretch (basic and acidic residues) spans 67 to 111; sequence EAEVKPEVKISEKKKIAEKIKEKERQQKKRQEEIKKRLEEPEESK. Positions 75-140 form a coiled coil; the sequence is KISEKKKIAE…ESDLELAKET (66 aa). Residue K111 forms a Glycyl lysine isopeptide (Lys-Gly) (interchain with G-Cter in SUMO2) linkage. A Phosphothreonine modification is found at T114. S132 is modified (phosphoserine). The promotes stable association with the 40S ribosome stretch occupies residues 248–263; sequence YGGYEGGYVQDYEDFM. Y259 bears the Phosphotyrosine mark.

The protein belongs to the eIF-3 subunit J family. In terms of assembly, component of the eukaryotic translation initiation factor 3 (eIF-3) complex, which is composed of 13 subunits: EIF3A, EIF3B, EIF3C, EIF3D, EIF3E, EIF3F, EIF3G, EIF3H, EIF3I, EIF3J, EIF3K, EIF3L and EIF3M. The eIF-3 complex appears to include 3 stable modules: module A is composed of EIF3A, EIF3B, EIF3G and EIF3I; module B is composed of EIF3F, EIF3H, and EIF3M; and module C is composed of EIF3C, EIF3D, EIF3E, EIF3K and EIF3L. EIF3C of module C binds EIF3B of module A and EIF3H of module B, thereby linking the three modules. EIF3J is a labile subunit that binds to the eIF-3 complex via EIF3B. The eIF-3 complex interacts with RPS6KB1 under conditions of nutrient depletion. Mitogenic stimulation leads to binding and activation of a complex composed of MTOR and RPTOR, leading to phosphorylation and release of RPS6KB1 and binding of EIF4B to eIF-3. Phosphorylated. Phosphorylation is enhanced upon serum stimulation.

The protein resides in the cytoplasm. Component of the eukaryotic translation initiation factor 3 (eIF-3) complex, which is required for several steps in the initiation of protein synthesis. The eIF-3 complex associates with the 40S ribosome and facilitates the recruitment of eIF-1, eIF-1A, eIF-2:GTP:methionyl-tRNAi and eIF-5 to form the 43S pre-initiation complex (43S PIC). The eIF-3 complex stimulates mRNA recruitment to the 43S PIC and scanning of the mRNA for AUG recognition. The eIF-3 complex is also required for disassembly and recycling of post-termination ribosomal complexes and subsequently prevents premature joining of the 40S and 60S ribosomal subunits prior to initiation. The eIF-3 complex specifically targets and initiates translation of a subset of mRNAs involved in cell proliferation, including cell cycling, differentiation and apoptosis, and uses different modes of RNA stem-loop binding to exert either translational activation or repression. This subunit binds directly within the mRNA entry channel of the 40S ribosome to the aminoacyl (A) site. It may regulate the interaction between the 43S PIC and mRNA. The sequence is that of Eukaryotic translation initiation factor 3 subunit J-B (Eif3j2) from Mus musculus (Mouse).